The following is a 361-amino-acid chain: 5-formaminoimidazole-4-carboxamide-1-(beta)-D-ribofuranosyl 5'-monophosphate synthetase (361 aa).

Residues His-27 and Ser-94 each coordinate 5-amino-1-(5-phospho-beta-D-ribosyl)imidazole-4-carboxamide. In terms of domain architecture, ATP-grasp spans 116 to 348; sequence RQILRWEAER…MGQRIAKEIK (233 aa). Residues 146 to 208 and Glu-230 contribute to the ATP site; that span reads PDEI…TNYC. Asn-258 contributes to the 5-amino-1-(5-phospho-beta-D-ribosyl)imidazole-4-carboxamide binding site. Positions 297 and 310 each coordinate Mg(2+).

This sequence belongs to the phosphohexose mutase family. It depends on Mg(2+) as a cofactor. Requires Mn(2+) as cofactor.

It catalyses the reaction 5-amino-1-(5-phospho-beta-D-ribosyl)imidazole-4-carboxamide + formate + ATP = 5-formamido-1-(5-phospho-D-ribosyl)imidazole-4-carboxamide + ADP + phosphate. It participates in purine metabolism; IMP biosynthesis via de novo pathway; 5-formamido-1-(5-phospho-D-ribosyl)imidazole-4-carboxamide from 5-amino-1-(5-phospho-D-ribosyl)imidazole-4-carboxamide (formate route): step 1/1. Its function is as follows. Catalyzes the ATP- and formate-dependent formylation of 5-aminoimidazole-4-carboxamide-1-beta-d-ribofuranosyl 5'-monophosphate (AICAR) to 5-formaminoimidazole-4-carboxamide-1-beta-d-ribofuranosyl 5'-monophosphate (FAICAR) in the absence of folates. In Methanococcus aeolicus (strain ATCC BAA-1280 / DSM 17508 / OCM 812 / Nankai-3), this protein is 5-formaminoimidazole-4-carboxamide-1-(beta)-D-ribofuranosyl 5'-monophosphate synthetase.